Consider the following 141-residue polypeptide: Hemoglobin subunit alpha (141 aa).

The Globin domain maps to 1–141 (VLSPTDKTNV…VSTVLTSKYR (141 aa)). A Phosphoserine modification is found at Ser-3. Lys-7 is subject to N6-succinyllysine. A Phosphothreonine modification is found at Thr-8. Position 11 is an N6-succinyllysine (Lys-11). Tyr-24 is modified (phosphotyrosine). At Ser-35 the chain carries Phosphoserine. At Lys-40 the chain carries N6-succinyllysine. A Phosphoserine modification is found at Ser-49. His-58 is a binding site for O2. His-87 lines the heme b pocket. Ser-102 is modified (phosphoserine). Thr-108 carries the post-translational modification Phosphothreonine. Position 124 is a phosphoserine (Ser-124). Thr-134 and Thr-137 each carry phosphothreonine. Ser-138 is subject to Phosphoserine.

This sequence belongs to the globin family. In terms of assembly, heterotetramer of two alpha chains and two beta chains. Red blood cells.

Involved in oxygen transport from the lung to the various peripheral tissues. In terms of biological role, hemopressin acts as an antagonist peptide of the cannabinoid receptor CNR1. Hemopressin-binding efficiently blocks cannabinoid receptor CNR1 and subsequent signaling. This Rhinoceros unicornis (Greater Indian rhinoceros) protein is Hemoglobin subunit alpha (HBA).